Here is a 263-residue protein sequence, read N- to C-terminus: 3-methyl-2-oxobutanoate hydroxymethyltransferase (263 aa).

Mg(2+)-binding residues include Asp45 and Asp84. 3-methyl-2-oxobutanoate is bound by residues 45–46 (DS), Asp84, and Lys113. Glu115 lines the Mg(2+) pocket. Glu182 acts as the Proton acceptor in catalysis.

This sequence belongs to the PanB family. In terms of assembly, homodecamer; pentamer of dimers. The cofactor is Mg(2+).

The protein localises to the cytoplasm. The enzyme catalyses 3-methyl-2-oxobutanoate + (6R)-5,10-methylene-5,6,7,8-tetrahydrofolate + H2O = 2-dehydropantoate + (6S)-5,6,7,8-tetrahydrofolate. The protein operates within cofactor biosynthesis; coenzyme A biosynthesis. Catalyzes the reversible reaction in which hydroxymethyl group from 5,10-methylenetetrahydrofolate is transferred onto alpha-ketoisovalerate to form ketopantoate. The protein is 3-methyl-2-oxobutanoate hydroxymethyltransferase of Ignicoccus hospitalis (strain KIN4/I / DSM 18386 / JCM 14125).